The chain runs to 195 residues: Protein GrpE (195 aa).

Residues 1-24 are compositionally biased toward polar residues; that stretch reads MSSKEQNTPDEQVSQESEMEQGQQ. Positions 1 to 40 are disordered; sequence MSSKEQNTPDEQVSQESEMEQGQQAEAAPETVDVVDPRDE.

The protein belongs to the GrpE family. Homodimer.

It is found in the cytoplasm. Functionally, participates actively in the response to hyperosmotic and heat shock by preventing the aggregation of stress-denatured proteins, in association with DnaK and GrpE. It is the nucleotide exchange factor for DnaK and may function as a thermosensor. Unfolded proteins bind initially to DnaJ; upon interaction with the DnaJ-bound protein, DnaK hydrolyzes its bound ATP, resulting in the formation of a stable complex. GrpE releases ADP from DnaK; ATP binding to DnaK triggers the release of the substrate protein, thus completing the reaction cycle. Several rounds of ATP-dependent interactions between DnaJ, DnaK and GrpE are required for fully efficient folding. This is Protein GrpE from Sodalis glossinidius (strain morsitans).